We begin with the raw amino-acid sequence, 442 residues long: MSNSVNSSKYQPLTTRQGDRIAVVSGIRTPFAKQSTAFSTTPAVDLGKLAVKALMDKTDIDPKLIDQVVFGQVVQMPEAPNIAREIVLGTGMNIGTDAYSVTRACATSFQTTANVVESIMAGTIDIGIAGGADSSSVLPIGVSKKLASTLLALSKTKTVYQKLSLLRTLSLKDIAPVPPAVAEYSTGISMGQTAEQMAKSHGITREEQDALAHRSHTLAAKAWKDGLIQDEVMTAFPEPYTAWLDHDNNIRHDSDLASYAKLRPAFDHKYGSVTAANSTPLTDGGAALLLMSEKRAKELGYEPLGYIRSFAFSAIDVHHDMLMGPSYATPMALDKAGISLSDLTLIDMHEAFAAQTLSNVKMFASNKFAKEYLGRDKAIGEIDMEKFNVLGGSIAYGHPFAATGARMIIQTLRELKRRGGGLGLNTACAAGGLGAAMVLEVE.

The Acyl-thioester intermediate role is filled by Cys105. Active-site proton acceptor residues include His398 and Cys428.

It belongs to the thiolase-like superfamily. Thiolase family. In terms of assembly, heterotetramer of two alpha chains (FadJ) and two beta chains (FadI).

It is found in the cytoplasm. It catalyses the reaction an acyl-CoA + acetyl-CoA = a 3-oxoacyl-CoA + CoA. Its pathway is lipid metabolism; fatty acid beta-oxidation. In terms of biological role, catalyzes the final step of fatty acid oxidation in which acetyl-CoA is released and the CoA ester of a fatty acid two carbons shorter is formed. The sequence is that of 3-ketoacyl-CoA thiolase from Aliivibrio fischeri (strain ATCC 700601 / ES114) (Vibrio fischeri).